Reading from the N-terminus, the 282-residue chain is Transcription factor MYB20 (282 aa).

2 HTH myb-type domains span residues 9 to 61 (KVGL…TNYL) and 62 to 116 (RPDL…KKKL). DNA-binding regions (H-T-H motif) lie at residues 37–61 (WRAV…TNYL) and 89–112 (WSKI…NTHI).

Expressed in chalaza of mature seeds, cotyledons, rosette leaves, cauline leaves, veins of stems, mature siliques, sepals and styles. Expressed at low levels in roots.

The protein localises to the nucleus. Its function is as follows. Transcription factor that acts as a positive regulator of abscisic acid (ABA) signaling in response to salt stress. Acts as a negative regulator ABI1, ABI2 and PP2CA, which are protein phosphatases 2C acting as negative regulator of ABA signaling. Binds to the DNA specific sequence and core element 5'-ACGT-3' found in the promoters of ABI1 and PP2CA to negatively regulate their expression during ABA-dependent salt stress response. In Arabidopsis thaliana (Mouse-ear cress), this protein is Transcription factor MYB20.